A 91-amino-acid polypeptide reads, in one-letter code: Co-chaperonin GroES (91 aa).

It belongs to the GroES chaperonin family. As to quaternary structure, heptamer of 7 subunits arranged in a ring. Interacts with the chaperonin GroEL.

The protein resides in the cytoplasm. In terms of biological role, together with the chaperonin GroEL, plays an essential role in assisting protein folding. The GroEL-GroES system forms a nano-cage that allows encapsulation of the non-native substrate proteins and provides a physical environment optimized to promote and accelerate protein folding. GroES binds to the apical surface of the GroEL ring, thereby capping the opening of the GroEL channel. The protein is Co-chaperonin GroES of Oenococcus oeni (strain ATCC BAA-331 / PSU-1).